Consider the following 552-residue polypeptide: HTH-type transcriptional regulator SgrR (552 aa).

Residues 1–116 enclose the HTH marR-type domain; the sequence is MPSARLQQQF…LVSHLGRSFR (116 aa). The segment at residues 26–49 is a DNA-binding region (H-T-H motif); sequence LNELAALLSCSRRHMRTLLNTMQD. The segment at 163-492 is solute-binding; the sequence is ELEADIAHHW…IDWQVDAARW (330 aa).

Its function is as follows. Activates the small RNA gene sgrS under glucose-phosphate stress conditions as well as yfdZ. Represses its own transcription under both stress and non-stress conditions. Might act as a sensor of the intracellular accumulation of phosphoglucose by binding these molecules in its C-terminal solute-binding domain. The protein is HTH-type transcriptional regulator SgrR of Escherichia coli O157:H7.